The following is a 145-amino-acid chain: UPF0179 protein Maeo_1037 (145 aa).

It belongs to the UPF0179 family.

The polypeptide is UPF0179 protein Maeo_1037 (Methanococcus aeolicus (strain ATCC BAA-1280 / DSM 17508 / OCM 812 / Nankai-3)).